Reading from the N-terminus, the 352-residue chain is Phosphoribosylformylglycinamidine cyclo-ligase (352 aa).

The protein belongs to the AIR synthase family.

It localises to the cytoplasm. The catalysed reaction is 2-formamido-N(1)-(5-O-phospho-beta-D-ribosyl)acetamidine + ATP = 5-amino-1-(5-phospho-beta-D-ribosyl)imidazole + ADP + phosphate + H(+). It participates in purine metabolism; IMP biosynthesis via de novo pathway; 5-amino-1-(5-phospho-D-ribosyl)imidazole from N(2)-formyl-N(1)-(5-phospho-D-ribosyl)glycinamide: step 2/2. The sequence is that of Phosphoribosylformylglycinamidine cyclo-ligase from Stenotrophomonas maltophilia (strain R551-3).